The chain runs to 283 residues: Malonyl-[acyl-carrier protein] O-methyltransferase (283 aa).

This sequence belongs to the methyltransferase superfamily.

It carries out the reaction malonyl-[ACP] + S-adenosyl-L-methionine = malonyl-[ACP] methyl ester + S-adenosyl-L-homocysteine. The protein operates within cofactor biosynthesis; biotin biosynthesis. Functionally, converts the free carboxyl group of a malonyl-thioester to its methyl ester by transfer of a methyl group from S-adenosyl-L-methionine (SAM). It allows to synthesize pimeloyl-ACP via the fatty acid synthetic pathway. In Acetivibrio thermocellus (strain ATCC 27405 / DSM 1237 / JCM 9322 / NBRC 103400 / NCIMB 10682 / NRRL B-4536 / VPI 7372) (Clostridium thermocellum), this protein is Malonyl-[acyl-carrier protein] O-methyltransferase.